A 462-amino-acid polypeptide reads, in one-letter code: L-seryl-tRNA(Sec) selenium transferase (462 aa).

Lys-295 carries the post-translational modification N6-(pyridoxal phosphate)lysine.

It belongs to the SelA family. In terms of assembly, homodecamer; pentamer of dimers. Binds only one seryl-tRNA(Sec) per dimer. Pyridoxal 5'-phosphate is required as a cofactor.

It is found in the cytoplasm. It carries out the reaction L-seryl-tRNA(Sec) + selenophosphate + H(+) = L-selenocysteinyl-tRNA(Sec) + phosphate. The protein operates within aminoacyl-tRNA biosynthesis; selenocysteinyl-tRNA(Sec) biosynthesis; selenocysteinyl-tRNA(Sec) from L-seryl-tRNA(Sec) (bacterial route): step 1/1. In terms of biological role, converts seryl-tRNA(Sec) to selenocysteinyl-tRNA(Sec) required for selenoprotein biosynthesis. This chain is L-seryl-tRNA(Sec) selenium transferase, found in Klebsiella pneumoniae subsp. pneumoniae (strain ATCC 700721 / MGH 78578).